The sequence spans 807 residues: ATP-binding cassette sub-family F member 1 (807 aa).

Residues 1–227 form a disordered region; it reads MPKGPKQQPP…KEKAKKAEQM (227 aa). Ser-22 bears the Phosphoserine mark. Basic residues predominate over residues 29–39; sequence KKGKKDKKTKK. Positions 47-65 are enriched in basic and acidic residues; it reads VEDRQAGEEEKVLKEKEQQ. Over residues 73–85 the composition is skewed to basic residues; the sequence is QKKKRDTRKGRRK. Ser-106 is modified (phosphoserine). 2 positions are modified to phosphoserine; by CK2: Ser-110 and Ser-141. Residues 148-161 show a composition bias toward basic and acidic residues; it reads EKHPPKPAKPEKNR. Ser-167 is modified (phosphoserine). The span at 197–207 shows a compositional bias: acidic residues; that stretch reads LDDEEEQDEEE. The span at 208-227 shows a compositional bias: basic and acidic residues; it reads IKEKEPPKQGKEKAKKAEQM. Positions 266–510 constitute an ABC transporter 1 domain; it reads IKLEKFSISA…MYQQKQKELL (245 aa). 298-305 contributes to the ATP binding site; it reads GPNGKGKT. Over residues 521–542 the composition is skewed to basic and acidic residues; it reads KELKAGGKSTKQAEKQTKEALT. Positions 521-564 are disordered; it reads KELKAGGKSTKQAEKQTKEALTRKQQKCRRKNQDEESQEAPELL. Ser-557 bears the Phosphoserine mark. Residues 587–802 enclose the ABC transporter 2 domain; the sequence is LGLHGVTFGY…VLEALGEVMV (216 aa). 620 to 627 lines the ATP pocket; it reads GPNGVGKS.

This sequence belongs to the ABC transporter superfamily. ABCF family. EF3 subfamily. As to quaternary structure, interacts (via N-terminus) with EIF2S1; the interaction is independent of its phosphorylated status. Associates (via both ABC transporter domains) with the ribosomes. Phosphorylated at phosphoserine and phosphothreonine. Phosphorylation on Ser-110 and Ser-141 by CK2; inhibits association of EIF2 with ribosomes.

The protein resides in the cytoplasm. Its subcellular location is the nucleus. It is found in the nucleoplasm. It localises to the nucleus envelope. Required for efficient Cap- and IRES-mediated mRNA translation initiation. Not involved in the ribosome biogenesis. The protein is ATP-binding cassette sub-family F member 1 (ABCF1) of Sus scrofa (Pig).